The sequence spans 106 residues: Small ribosomal subunit protein uS10 (106 aa).

The protein belongs to the universal ribosomal protein uS10 family. Part of the 30S ribosomal subunit.

Involved in the binding of tRNA to the ribosomes. The protein is Small ribosomal subunit protein uS10 of Pyrobaculum calidifontis (strain DSM 21063 / JCM 11548 / VA1).